We begin with the raw amino-acid sequence, 147 residues long: Mid1-interacting protein 1-B (147 aa).

It belongs to the SPOT14 family.

The protein resides in the nucleus. The protein localises to the cytoplasm. It localises to the cytoskeleton. Involved in stabilization of microtubules. May play a role in the regulation of lipogenesis. The protein is Mid1-interacting protein 1-B of Danio rerio (Zebrafish).